The chain runs to 958 residues: Coiled-coil domain-containing protein 187 (958 aa).

Positions S116–S132 are enriched in low complexity. Disordered stretches follow at residues S116–R160, E345–F447, Q470–W492, and E510–A602. Composition is skewed to polar residues over residues L374–L398 and Q470–P491. Low complexity predominate over residues S536–A545. Positions K718 to L743 form a coiled coil. A disordered region spans residues E916 to A958.

In Mus musculus (Mouse), this protein is Coiled-coil domain-containing protein 187.